The chain runs to 401 residues: Argininosuccinate synthase (401 aa).

8–16 (AYSGGLDTS) lines the ATP pocket. Positions 86 and 91 each coordinate L-citrulline. Glycine 116 contacts ATP. Threonine 118, asparagine 122, and aspartate 123 together coordinate L-aspartate. Residue asparagine 122 participates in L-citrulline binding. L-citrulline contacts are provided by arginine 126, serine 175, serine 184, glutamate 260, and tyrosine 272.

This sequence belongs to the argininosuccinate synthase family. Type 1 subfamily. In terms of assembly, homotetramer.

The protein resides in the cytoplasm. It catalyses the reaction L-citrulline + L-aspartate + ATP = 2-(N(omega)-L-arginino)succinate + AMP + diphosphate + H(+). It participates in amino-acid biosynthesis; L-arginine biosynthesis; L-arginine from L-ornithine and carbamoyl phosphate: step 2/3. The polypeptide is Argininosuccinate synthase (Clostridium kluyveri (strain ATCC 8527 / DSM 555 / NBRC 12016 / NCIMB 10680 / K1)).